Here is a 108-residue protein sequence, read N- to C-terminus: Insertion element IS6110 uncharacterized 12.0 kDa protein (108 aa).

It belongs to the transposase 8 family.

In Mycobacterium bovis (strain ATCC BAA-935 / AF2122/97), this protein is Insertion element IS6110 uncharacterized 12.0 kDa protein.